The primary structure comprises 490 residues: Lignostilbene-alpha,beta-dioxygenase isozyme III (490 aa).

Residues His167, His218, His285, and His477 each coordinate Fe cation.

Belongs to the carotenoid oxygenase family. As to quaternary structure, homodimer of two beta subunits. Fe(2+) is required as a cofactor.

The enzyme catalyses 1,2-bis(4-hydroxy-3-methoxyphenyl)ethylene + O2 = 2 vanillin. With respect to regulation, activity is high with beta-5 type stilbene and minimal with beta-1 type stilbene. A 4-hydroxyl group and trans-stilbene structure is essential for the binding of substrates to the enzyme. Its function is as follows. Catalyzes the cleavage of the interphenyl double bond (C alpha-C beta) of lignin-derived polyphenolic diaryl-propane type compounds (Stilbene). This chain is Lignostilbene-alpha,beta-dioxygenase isozyme III, found in Sphingomonas paucimobilis (Pseudomonas paucimobilis).